A 220-amino-acid chain; its full sequence is Orotate phosphoribosyltransferase (220 aa).

A 5-phospho-alpha-D-ribose 1-diphosphate-binding site is contributed by Lys-26. 34 to 35 (FF) is a binding site for orotate. 5-phospho-alpha-D-ribose 1-diphosphate is bound by residues 72-73 (YK), Arg-101, Lys-102, Lys-105, His-107, and 126-134 (DDVITAGTS). Orotate is bound by residues Thr-130 and Arg-158.

Belongs to the purine/pyrimidine phosphoribosyltransferase family. PyrE subfamily. Homodimer. It depends on Mg(2+) as a cofactor.

It carries out the reaction orotidine 5'-phosphate + diphosphate = orotate + 5-phospho-alpha-D-ribose 1-diphosphate. Its pathway is pyrimidine metabolism; UMP biosynthesis via de novo pathway; UMP from orotate: step 1/2. Functionally, catalyzes the transfer of a ribosyl phosphate group from 5-phosphoribose 1-diphosphate to orotate, leading to the formation of orotidine monophosphate (OMP). The sequence is that of Orotate phosphoribosyltransferase from Bordetella avium (strain 197N).